The chain runs to 132 residues: ATP synthase epsilon chain, chloroplastic (132 aa).

Belongs to the ATPase epsilon chain family. As to quaternary structure, F-type ATPases have 2 components, CF(1) - the catalytic core - and CF(0) - the membrane proton channel. CF(1) has five subunits: alpha(3), beta(3), gamma(1), delta(1), epsilon(1). CF(0) has three main subunits: a, b and c.

Its subcellular location is the plastid. It is found in the chloroplast thylakoid membrane. Produces ATP from ADP in the presence of a proton gradient across the membrane. The protein is ATP synthase epsilon chain, chloroplastic of Adiantum capillus-veneris (Maidenhair fern).